Here is a 369-residue protein sequence, read N- to C-terminus: Cytoplasmic tRNA 2-thiolation protein 1 (369 aa).

It belongs to the TtcA family. CTU1/NCS6/ATPBD3 subfamily.

It is found in the cytoplasm. It functions in the pathway tRNA modification; 5-methoxycarbonylmethyl-2-thiouridine-tRNA biosynthesis. Its function is as follows. Plays a central role in 2-thiolation of mcm(5)S(2)U at tRNA wobble positions of tRNA(Lys), tRNA(Glu) and tRNA(Gln). Directly binds tRNAs and probably acts by catalyzing adenylation of tRNAs, an intermediate required for 2-thiolation. It is unclear whether it acts as a sulfurtransferase that transfers sulfur from thiocarboxylated URM1 onto the uridine of tRNAs at wobble position. Prior mcm(5) tRNA modification by the elongator complex is required for 2-thiolation. May also be involved in protein urmylation. The protein is Cytoplasmic tRNA 2-thiolation protein 1 of Cryptococcus neoformans var. neoformans serotype D (strain JEC21 / ATCC MYA-565) (Filobasidiella neoformans).